The following is a 239-amino-acid chain: MKLYEYLVEGTKHFTLIDPDKSVDYLKIAKYALEAGTDGILVGGSLGIRESQITQVVKDIKSIAHVPVVIFPGSISQLTDEADGVLFLSVLNSLDPYYIIGAQIQGAVLLAKHYPKLEVISTAYIIIGDGGAAGFVSMSKPIPYTRPDIVMAYALAANYIGFKAVYLEAGSGAPQPAPPEMVRAARRVFPRILIVGGGIRSGEVAYTIAREKPNVIVTGTLAEEKPEKLGEIIRAIKSA.

Asp18 and Ser45 together coordinate Mg(2+). Residues Tyr166–Gly172, Gly197–Gly198, and Gly219–Thr220 contribute to the sn-glycerol 1-phosphate site.

This sequence belongs to the GGGP/HepGP synthase family. Group II subfamily. Mg(2+) is required as a cofactor.

It is found in the cytoplasm. It carries out the reaction sn-glycerol 1-phosphate + (2E,6E,10E)-geranylgeranyl diphosphate = sn-3-O-(geranylgeranyl)glycerol 1-phosphate + diphosphate. The protein operates within membrane lipid metabolism; glycerophospholipid metabolism. Functionally, prenyltransferase that catalyzes the transfer of the geranylgeranyl moiety of geranylgeranyl diphosphate (GGPP) to the C3 hydroxyl of sn-glycerol-1-phosphate (G1P). This reaction is the first ether-bond-formation step in the biosynthesis of archaeal membrane lipids. The protein is Geranylgeranylglyceryl phosphate synthase of Pyrobaculum islandicum (strain DSM 4184 / JCM 9189 / GEO3).